A 491-amino-acid polypeptide reads, in one-letter code: Bifunctional protein HldE (491 aa).

The segment at 1 to 330 (MDRKMVESLF…AAVSLEHRDS (330 aa)) is ribokinase. Residue 205 to 208 (NRKE) participates in ATP binding. Aspartate 275 is an active-site residue. The cytidylyltransferase stretch occupies residues 356 to 491 (FTNGCFDLLH…KVLERYTDEQ (136 aa)).

It in the N-terminal section; belongs to the carbohydrate kinase PfkB family. The protein in the C-terminal section; belongs to the cytidylyltransferase family. Homodimer.

The catalysed reaction is D-glycero-beta-D-manno-heptose 7-phosphate + ATP = D-glycero-beta-D-manno-heptose 1,7-bisphosphate + ADP + H(+). It carries out the reaction D-glycero-beta-D-manno-heptose 1-phosphate + ATP + H(+) = ADP-D-glycero-beta-D-manno-heptose + diphosphate. It participates in nucleotide-sugar biosynthesis; ADP-L-glycero-beta-D-manno-heptose biosynthesis; ADP-L-glycero-beta-D-manno-heptose from D-glycero-beta-D-manno-heptose 7-phosphate: step 1/4. It functions in the pathway nucleotide-sugar biosynthesis; ADP-L-glycero-beta-D-manno-heptose biosynthesis; ADP-L-glycero-beta-D-manno-heptose from D-glycero-beta-D-manno-heptose 7-phosphate: step 3/4. Its function is as follows. Catalyzes the phosphorylation of D-glycero-D-manno-heptose 7-phosphate at the C-1 position to selectively form D-glycero-beta-D-manno-heptose-1,7-bisphosphate. Catalyzes the ADP transfer from ATP to D-glycero-beta-D-manno-heptose 1-phosphate, yielding ADP-D-glycero-beta-D-manno-heptose. The sequence is that of Bifunctional protein HldE from Trichlorobacter lovleyi (strain ATCC BAA-1151 / DSM 17278 / SZ) (Geobacter lovleyi).